Reading from the N-terminus, the 152-residue chain is Proteolipid protein 2 (152 aa).

The MARVEL domain maps to 19–138 (FSRTKKGILL…DAYITFPLKQ (120 aa)). A run of 4 helical transmembrane segments spans residues 25 to 45 (GILL…FSAS), 48 to 68 (SAYS…LVFY), 85 to 105 (DFFR…VVLV), and 112 to 132 (RVVA…DAYI).

It is found in the membrane. Functionally, may play a role in cell differentiation in the intestinal epithelium. This chain is Proteolipid protein 2 (Plp2), found in Mus musculus (Mouse).